The following is a 345-amino-acid chain: Trans-3-hydroxy-L-proline dehydratase (345 aa).

Ser-90 (proton acceptor) is an active-site residue. Residues 91-92 (GS), Asp-252, and 257-258 (GT) contribute to the substrate site.

This sequence belongs to the proline racemase family.

It catalyses the reaction trans-3-hydroxy-L-proline = 1-pyrroline-2-carboxylate + H2O. In terms of biological role, catalyzes the dehydration of trans-3-hydroxy-L-proline (t3LHyp) to Delta(1)-pyrroline-2-carboxylate (Pyr2C). May be involved in a degradation pathway that converts t3LHyp to L-proline, which would allow S.novella to grow on t3LHyp as a sole carbon source. The chain is Trans-3-hydroxy-L-proline dehydratase from Ancylobacter novellus (strain ATCC 8093 / DSM 506 / JCM 20403 / CCM 1077 / IAM 12100 / NBRC 12443 / NCIMB 10456) (Starkeya novella).